The sequence spans 290 residues: Polyamine aminopropyltransferase (290 aa).

Residues 5-238 (QLWYEKLHSS…GIMTFAWASE (234 aa)) form the PABS domain. Residue glutamine 33 participates in S-methyl-5'-thioadenosine binding. Positions 64 and 88 each coordinate spermidine. Residues glutamate 108 and 140-141 (DG) contribute to the S-methyl-5'-thioadenosine site. Aspartate 158 serves as the catalytic Proton acceptor. A spermidine-binding site is contributed by 158 to 161 (DSTD). An S-methyl-5'-thioadenosine-binding site is contributed by proline 165.

The protein belongs to the spermidine/spermine synthase family. In terms of assembly, homodimer or homotetramer.

The protein localises to the cytoplasm. It carries out the reaction S-adenosyl 3-(methylsulfanyl)propylamine + putrescine = S-methyl-5'-thioadenosine + spermidine + H(+). The protein operates within amine and polyamine biosynthesis; spermidine biosynthesis; spermidine from putrescine: step 1/1. Catalyzes the irreversible transfer of a propylamine group from the amino donor S-adenosylmethioninamine (decarboxy-AdoMet) to putrescine (1,4-diaminobutane) to yield spermidine. The protein is Polyamine aminopropyltransferase of Hamiltonella defensa subsp. Acyrthosiphon pisum (strain 5AT).